The following is a 199-amino-acid chain: ATP-dependent Clp protease proteolytic subunit (199 aa).

Ser-98 (nucleophile) is an active-site residue. The active site involves His-123.

Belongs to the peptidase S14 family. In terms of assembly, fourteen ClpP subunits assemble into 2 heptameric rings which stack back to back to give a disk-like structure with a central cavity, resembling the structure of eukaryotic proteasomes.

It localises to the cytoplasm. The enzyme catalyses Hydrolysis of proteins to small peptides in the presence of ATP and magnesium. alpha-casein is the usual test substrate. In the absence of ATP, only oligopeptides shorter than five residues are hydrolyzed (such as succinyl-Leu-Tyr-|-NHMec, and Leu-Tyr-Leu-|-Tyr-Trp, in which cleavage of the -Tyr-|-Leu- and -Tyr-|-Trp bonds also occurs).. Functionally, cleaves peptides in various proteins in a process that requires ATP hydrolysis. Has a chymotrypsin-like activity. Plays a major role in the degradation of misfolded proteins. The sequence is that of ATP-dependent Clp protease proteolytic subunit from Ehrlichia chaffeensis (strain ATCC CRL-10679 / Arkansas).